We begin with the raw amino-acid sequence, 230 residues long: Somatolactin (230 aa).

Residues 1 to 25 (MHTKVLQQGLWALLLWPHLFTVSVP) form the signal peptide. Disulfide bonds link Cys28–Cys38, Cys88–Cys204, and Cys221–Cys229. An N-linked (GlcNAc...) asparagine glycan is attached at Asn144.

It belongs to the somatotropin/prolactin family.

It localises to the secreted. Functionally, selectively regulates proliferation and morphogenesis of neural-crest derived pigment cells. This is Somatolactin from Oryzias latipes (Japanese rice fish).